A 346-amino-acid polypeptide reads, in one-letter code: Selenocysteine Se-methyltransferase (346 aa).

In terms of domain architecture, Hcy-binding spans 13–330 (SMKELLKETG…TTIRAIHKRL (318 aa)). Residues cysteine 248, cysteine 315, and cysteine 316 each coordinate Zn(2+).

It depends on Zn(2+) as a cofactor. In terms of tissue distribution, expressed in roots, young leaves and florets, but not detected in plants not exposed to selenium.

The catalysed reaction is S-methyl-L-methionine + L-selenocysteine = Se-methyl-L-selenocysteine + L-methionine + H(+). Its activity is regulated as follows. Inhibited by L-methionine. In terms of biological role, catalyzes the methylation of DL- and L-selenocysteine with S-methylmethionine as donor. Also methylates DL-homocysteine, DL- and L-cysteine in vitro. May be involved in selenium detoxification. This chain is Selenocysteine Se-methyltransferase (SMT), found in Brassica oleracea var. italica (Broccoli).